The chain runs to 311 residues: tRNA dimethylallyltransferase (311 aa).

11 to 18 (GPTAVGKT) lines the ATP pocket. 13–18 (TAVGKT) lines the substrate pocket. Positions 36–39 (DSMQ) are interaction with substrate tRNA.

Belongs to the IPP transferase family. In terms of assembly, monomer. Requires Mg(2+) as cofactor.

It carries out the reaction adenosine(37) in tRNA + dimethylallyl diphosphate = N(6)-dimethylallyladenosine(37) in tRNA + diphosphate. Functionally, catalyzes the transfer of a dimethylallyl group onto the adenine at position 37 in tRNAs that read codons beginning with uridine, leading to the formation of N6-(dimethylallyl)adenosine (i(6)A). The chain is tRNA dimethylallyltransferase from Clostridioides difficile (strain 630) (Peptoclostridium difficile).